The following is a 331-amino-acid chain: tRNA U34 carboxymethyltransferase (331 aa).

Carboxy-S-adenosyl-L-methionine-binding positions include K91, W105, K110, G130, 152-154, 181-182, M196, Y200, and R315; these read DPS and IE.

The protein belongs to the class I-like SAM-binding methyltransferase superfamily. CmoB family. In terms of assembly, homotetramer.

It catalyses the reaction carboxy-S-adenosyl-L-methionine + 5-hydroxyuridine(34) in tRNA = 5-carboxymethoxyuridine(34) in tRNA + S-adenosyl-L-homocysteine + H(+). Functionally, catalyzes carboxymethyl transfer from carboxy-S-adenosyl-L-methionine (Cx-SAM) to 5-hydroxyuridine (ho5U) to form 5-carboxymethoxyuridine (cmo5U) at position 34 in tRNAs. In Shewanella baltica (strain OS185), this protein is tRNA U34 carboxymethyltransferase.